Here is a 2177-residue protein sequence, read N- to C-terminus: Protein sidekick-2 (2177 aa).

A signal peptide spans 1–26; sequence MKGLGVPAAALLWGGLSALLPPSLPA. Over 27-1937 the chain is Extracellular; sequence DDVSPYFKTE…ANPFYEEWWF (1911 aa). 6 Ig-like C2-type domains span residues 31 to 113, 118 to 205, 220 to 299, 313 to 401, 407 to 496, and 501 to 590; these read PYFK…TEVQ, GSFE…QPIT, PTII…SSVP, PQFV…TYLA, PNIT…ADLV, and TRIT…AHLR. A disulfide bond links Cys53 and Cys96. N-linked (GlcNAc...) asparagine glycans are attached at residues Asn198 and Asn228. 2 disulfides stabilise this stretch: Cys242-Cys289 and Cys335-Cys385. An N-linked (GlcNAc...) asparagine glycan is attached at Asn408. Intrachain disulfides connect Cys428-Cys480 and Cys522-Cys574. Asn582, Asn614, Asn709, Asn748, Asn809, Asn941, and Asn953 each carry an N-linked (GlcNAc...) asparagine glycan. 13 Fibronectin type-III domains span residues 597 to 693, 698 to 794, 799 to 898, 902 to 996, 1000 to 1099, 1104 to 1202, 1207 to 1304, 1305 to 1402, 1407 to 1504, 1509 to 1626, 1631 to 1727, 1731 to 1826, and 1829 to 1928; these read APES…LPEE, PPQN…TLQG, PPGN…THED, PVGH…VPPE, APTN…TLQA, APAN…TRES, GPSN…TLDD, VPGP…TEKR, PPSK…TLQA, APTI…VGEA, APQN…TQQA, APGS…TGPG, and APGP…AQKA. Residues Asn1107, Asn1210, Asn1261, Asn1346, Asn1462, Asn1580, Asn1593, Asn1675, Asn1694, Asn1746, and Asn1820 are each glycosylated (N-linked (GlcNAc...) asparagine). The helical transmembrane segment at 1938 to 1958 threads the bilayer; it reads LVVIALVGLIFILLLVFVLII. Over 1959–2177 the chain is Cytoplasmic; sequence RGQSKKYAKK…APIGGFSSFV (219 aa). 2 disordered regions span residues 2044–2071 and 2103–2177; these read AESSSLTEKPSEVSDSQGSDSEYEVDPA and QAYS…SSFV. Polar residues-rich tracts occupy residues 2045–2063 and 2119–2130; these read ESSSLTEKPSEVSDSQGSD and PLSNSTSTQQGS. Positions 2142-2151 are enriched in pro residues; it reads PQTPGNPPSQ. The PDZ-binding signature appears at 2171–2177; the sequence is GGFSSFV.

Belongs to the sidekick family. In terms of assembly, homodimer; mediates homophilic interactions to promote cell adhesion. Expressed by non-overlapping subsets of retinal neurons. SDK1, SDK2, DSCAM and DSCAML1 are expressed in non-overlapping subsets of interneurons and retinal ganglion cells (RGCs) that form synapses in distinct inner plexiform layer (IPL) sublaminae.

It is found in the cell membrane. The protein localises to the synapse. Its function is as follows. Adhesion molecule that promotes lamina-specific synaptic connections in the retina. Expressed in specific subsets of interneurons and retinal ganglion cells (RGCs) and promotes synaptic connectivity via homophilic interactions. This Gallus gallus (Chicken) protein is Protein sidekick-2.